The primary structure comprises 173 residues: Ribosome maturation factor RimM (173 aa).

A PRC barrel domain is found at 97 to 170; that stretch reads EHEYYYHEII…RIRVHIMEGL (74 aa).

Belongs to the RimM family. Binds ribosomal protein uS19.

The protein resides in the cytoplasm. Functionally, an accessory protein needed during the final step in the assembly of 30S ribosomal subunit, possibly for assembly of the head region. Essential for efficient processing of 16S rRNA. May be needed both before and after RbfA during the maturation of 16S rRNA. It has affinity for free ribosomal 30S subunits but not for 70S ribosomes. The protein is Ribosome maturation factor RimM of Shouchella clausii (strain KSM-K16) (Alkalihalobacillus clausii).